A 259-amino-acid polypeptide reads, in one-letter code: Leucine-rich repeat-containing protein 3B (259 aa).

Residues 1–33 (MNLVDLWLTRSLSMCLLLQSFVLMILCFHSASM) form the signal peptide. The region spanning 34 to 64 (CPKGCLCSSSGGLNVTCSNANLKEIPRDLPP) is the LRRNT domain. Asparagine 47 carries an N-linked (GlcNAc...) asparagine glycan. LRR repeat units follow at residues 65–86 (ETVL…IFKD), 89–110 (QLRV…AFKG), and 114–135 (TLQT…AFNN). A glycan (N-linked (GlcNAc...) asparagine) is linked at asparagine 94. Residues 145 to 197 (NPWHCDCTLQQVLRSMVSNHETAHNVICKTSVLDEHAGRPFLNAANDADLCNL) enclose the LRRCT domain. The helical transmembrane segment at 205 to 225 (AMLVTMFGWFTMVISYVVYYV) threads the bilayer.

Belongs to the LRRC3 family.

It localises to the membrane. This chain is Leucine-rich repeat-containing protein 3B (LRRC3B), found in Bos taurus (Bovine).